Reading from the N-terminus, the 639-residue chain is Lipoteichoic acid synthase 1 (639 aa).

Residues 1–3 lie on the Cytoplasmic side of the membrane; that stretch reads MKK. The helical transmembrane segment at 4 to 24 threads the bilayer; that stretch reads LFSYKLSFFVLAVILFWAKTY. Topologically, residues 25–41 are extracellular; it reads LSYKTEFNLGVKGTTQE. Residues 42–62 form a helical membrane-spanning segment; the sequence is ILLIFNPFSSAVFFLGLALLA. At 63 to 67 the chain is on the cytoplasmic side; sequence KGRKS. Residues 68–88 traverse the membrane as a helical segment; sequence AIIMLIIDFLMTFVLYANILF. Residues 89-116 are Extracellular-facing; the sequence is YRFFDDFLTFPNIKQSGNVGNMGDGIFS. The chain crosses the membrane as a helical span at residues 117 to 137; that stretch reads IMAGHDIFYFLDIIILIAVLI. At 138-150 the chain is on the cytoplasmic side; the sequence is WRPELKEYKMKKR. The chain crosses the membrane as a helical span at residues 151–171; the sequence is FASLVILSGIALFFINLHYAE. Residues 172 to 639 lie on the Extracellular side of the membrane; it reads KDRPQLLTRT…YHYGKEKEIK (468 aa). Residues glutamate 252 and threonine 297 each coordinate Mn(2+). The active site involves threonine 297. Histidine 413 contributes to the substrate binding site. Mn(2+) contacts are provided by aspartate 472 and histidine 473.

Belongs to the LTA synthase family. Post-translationally, proteolytically cleaved by the type I signal peptidases SipT and SipV.

The protein resides in the cell membrane. The protein localises to the secreted. The protein operates within cell wall biogenesis; lipoteichoic acid biosynthesis. Catalyzes the polymerization of lipoteichoic acid (LTA) polyglycerol phosphate, a reaction that presumably uses phosphatidylglycerol (PG) as substrate. This Bacillus subtilis (strain 168) protein is Lipoteichoic acid synthase 1 (ltaS1).